Here is an 88-residue protein sequence, read N- to C-terminus: Pigment dispersing factor homolog pdf-1 (88 aa).

The signal sequence occupies residues 1–21 (MNRFIISMIALLAVFCAVSTA).

It localises to the secreted. Its function is as follows. Probable ligand of isoforms a and b of the calcitonin receptor-like protein, pdfr-1, a G-protein coupled receptor. May not signal through isoform c of pdfr-1. Involved in locomotion; more specifically mate searching behavior of males, independent of nutritional status. Involved in regulating the male-specific expression of TGFbeta-like daf-7 in the ASJ chemosensory neurons. Plays a role in circadian rhythms of locomotor activity. Involved in mediating arousal from the sleep-like state called lethargus, which occurs during molting between larval and adult stages, in part by regulating touch sensitivity, and working in concert with neuropeptide flp-2. In the presence of food, plays a role in initiating and extending exploratory roaming behavior, in opposition to 5-hydroxytryptamine (serotonin) signaling. The sequence is that of Pigment dispersing factor homolog pdf-1 from Caenorhabditis elegans.